The following is a 364-amino-acid chain: Mannose-1-phosphate guanyltransferase (364 aa).

It belongs to the transferase hexapeptide repeat family.

It localises to the cytoplasm. The catalysed reaction is alpha-D-mannose 1-phosphate + GTP + H(+) = GDP-alpha-D-mannose + diphosphate. The protein operates within nucleotide-sugar biosynthesis; GDP-alpha-D-mannose biosynthesis; GDP-alpha-D-mannose from alpha-D-mannose 1-phosphate (GTP route): step 1/1. Its function is as follows. Involved in cell wall synthesis where it is required for glycosylation. Involved in cell cycle progression through cell-size checkpoint. The sequence is that of Mannose-1-phosphate guanyltransferase (mpg1) from Aspergillus fumigatus (strain ATCC MYA-4609 / CBS 101355 / FGSC A1100 / Af293) (Neosartorya fumigata).